A 155-amino-acid polypeptide reads, in one-letter code: Large-conductance mechanosensitive channel (155 aa).

Transmembrane regions (helical) follow at residues 16–36, 40–60, and 88–108; these read VVDM…VNNL, VILP…LYII, and GVFL…FLLV.

Belongs to the MscL family. Homopentamer.

It localises to the cell inner membrane. Its function is as follows. Channel that opens in response to stretch forces in the membrane lipid bilayer. May participate in the regulation of osmotic pressure changes within the cell. The protein is Large-conductance mechanosensitive channel of Chlorobium chlorochromatii (strain CaD3).